We begin with the raw amino-acid sequence, 1904 residues long: MDQNGYNSSALQRPPRRGDEGCEEDRDSRPHHHHRHHHHHHHHRRDGDLPAGAVAGEAATASSNAGGANAHQHSTFSLRSPKPEYRPPPFSSPNGHNHSHHNTSTSSANHSLQSPPRPALPNPYMSSSTGAPGGPVAPALPPPVGINSSSSPGSSAAGLHQRHHQPGAPAHQHRAAPPPVSPLHPPVAYYPPGTNTDIYIPPPEPKPASRGFYDPTTDTTKERRISDAATPGASWHNANANAPPAGTPKTRDPYSYSQTADQHTPSYYNGGSYTSPRGPSYNRPRSPLSHSHQNPPAGSLSPPGQQPLLASPSVRHGTTANMNPTTNGASAIPPFKSDLAAPSPPKPAPSSTTSRANPMSFDSILSSSEPAPKPKEPSPIIAREPEIKEEREPRRDRESKRDSREPKQTKRSLEPELDHDTEVEKDVETEPEPLPSREKEKEPAPKKRGARKSTKGRASDIRDAATPKNGRRLSVKKESPTPRLPAKRQANGQPKPKTWSAEMEKKIQNAESDIENRAANLDADEFDEQQYKERAQKRRRVMSELDVEYGLSRRDALANTISKKLVLHAELGKRRYDDVFYDEALHEVREQEVYAEKERKKDMQRKRRREKSMAVTMEQKEAALARAEAAEDETERQKHLRDAERASKKAQQTKLILQKGIKGPARNLEINLEGGTMSSFQASDVESGEAGTPSGKRKGKGRSGPRLKKSKEQKQAEKDSAEAAQAALDAGEELPTKEENRVRIKIKKTKKDVAVDSEKDKDEAEKTEEEVVEKKTKKSKDKDKEKVDDIPDNEKRFMSKGYNQIYDQIWRDMARKDVNKTFKLAVDSYATKASNLKKTAILASKEAKRWQLRTNKGTKDLQARAKRVMRDMMGFWKRNEREERDLRKAAEKQEIENARKEEADREAARQKRKLNFLISQTELYSHFIGKKIKTDEVERSTDNPEIAKDAHQTDQKMLDIDEPTGPVIGKVTNFENLDFEEGSDEALRAAAMANAQNAIAEAQKKARDFNNQGLDMDDEGEMNFQNPTGLGDVEIEQPKLINAQLKEYQLKGLNWLVNLYEQGINGILADEMGLGKTVQSISVMAYLAEKHDIWGPFLVVAPASTLHNWQQEIAKFVPEFKILPYWGGASDRKVLRKFWDRKHTTYRKDAPFHVCVTSYQLVVSDVAYFQKMRWQYMILDEAQAIKSSQSSRWKALLNFHCRNRLLLTGTPIQNNMQELWALLHFIMPSLFDSHDEFSEWFSKDIESHAQSNTKLNEDQLKRLHMILKPFMLRRVKKHVQKELGDKIELDIFCDLTYRQRAYYSNLRNQINIMDLVEKATMGDDQDSGTLMNLVMQFRKVCNHPDLFERAEVNSPFACAYFAETASFVREGNDVAVGYSSRNLIEYELPRLVWRDGGRVHKAGPDSQVAGWKNRTLNHLMNIWSPDNIRDSSDGSKAFSWLRFADTSPNEAYQATHQSLIARAAKELQKRDRLGYMNVAYSDTEDANFTPAHALFQIRPRQNRKPLADITNEGILSRLMNVAQGDYDESGLGRLEPAGRPRASAPPIQVSCRSWASEFERSEVLFNAPIRKILYGPTVFEEKALVEKKLPMELWPTRQMLPKPDHEKKGFTNISIPSMQRFVTDSGKLAKLDDLLFKLKSEGHRVLLYFQMTRMIDMMEEYLTYRNYKYCRLDGSTKLEDRRDTVHDFQTRPEIFIFLLSTRAGGLGINLTTADTVIFYDSDWNPTIDSQAMDRAHRLGQTKQVTVYRLITRGTIEERIRKRAMQKEEVQRVVIQGGGASVDFSGRRAPENRNRDIAMWLADDEQAEMIERREKELLESGELEKQQKKKGGKRRKAENSASLDEMYHEGEGNFDDGSKGVSGTATPATAATPADSDSKGKKGRKGTKRAKTAKQRLAIADGMME.

Residues 1–11 (MDQNGYNSSAL) show a composition bias toward polar residues. Disordered regions lie at residues 1 to 501 (MDQN…TWSA) and 594 to 792 (YAEK…DIPD). The segment covering 29–44 (RPHHHHRHHHHHHHHR) has biased composition (basic residues). Composition is skewed to low complexity over residues 51 to 70 (AGAV…GANA), 92 to 111 (SPNG…ANHS), and 148 to 158 (SSSSPGSSAAG). Positions 176–189 (APPPVSPLHPPVAY) are enriched in pro residues. Polar residues-rich tracts occupy residues 255-277 (SYSQ…TSPR) and 316-329 (HGTT…TNGA). Composition is skewed to basic and acidic residues over residues 383–428 (REPE…KDVE) and 435–445 (PSREKEKEPAP). Over residues 446 to 455 (KKRGARKSTK) the composition is skewed to basic residues. 3 coiled-coil regions span residues 590–655 (EQEV…QTKL), 706–783 (RLKK…KDKD), and 877–922 (KRNE…SQTE). A compositionally biased stretch (basic and acidic residues) spans 635 to 647 (ERQKHLRDAERAS). A compositionally biased stretch (basic residues) spans 695–709 (GKRKGKGRSGPRLKK). Basic and acidic residues-rich tracts occupy residues 710 to 721 (SKEQKQAEKDSA), 751 to 764 (KDVA…KDEA), and 780 to 792 (KDKD…DIPD). The DBINO domain occupies 809-934 (IWRDMARKDV…SHFIGKKIKT (126 aa)). Residues 1057 to 1229 (VNLYEQGING…WALLHFIMPS (173 aa)) form the Helicase ATP-binding domain. 1070 to 1077 (DEMGLGKT) is an ATP binding site. The DEAQ box motif lies at 1180–1183 (DEAQ). The 160-residue stretch at 1630 to 1789 (KLDDLLFKLK…SVDFSGRRAP (160 aa)) folds into the Helicase C-terminal domain. Over residues 1814 to 1825 (KELLESGELEKQ) the composition is skewed to basic and acidic residues. Residues 1814–1904 (KELLESGELE…RLAIADGMME (91 aa)) form a disordered region. A compositionally biased stretch (basic residues) spans 1826-1835 (QKKKGGKRRK). Low complexity predominate over residues 1863–1873 (TATPATAATPA). Basic residues predominate over residues 1880–1893 (KKGRKGTKRAKTAK).

The protein belongs to the SNF2/RAD54 helicase family. Component of the INO80 chromatin-remodeling complex.

The protein resides in the nucleus. It carries out the reaction ATP + H2O = ADP + phosphate + H(+). Its function is as follows. ATPase component of the INO80 complex which remodels chromatin by shifting nucleosomes and is involved in DNA repair. The protein is Chromatin-remodeling ATPase INO80 (INO80) of Gibberella zeae (strain ATCC MYA-4620 / CBS 123657 / FGSC 9075 / NRRL 31084 / PH-1) (Wheat head blight fungus).